Reading from the N-terminus, the 102-residue chain is Putative toxin YafQ (102 aa).

The protein belongs to the RelE toxin family. YafQ subfamily.

Its function is as follows. Toxic component of a type II toxin-antitoxin (TA) system. Its cognate antitoxin is RelB. This is Putative toxin YafQ from Haemophilus influenzae (strain ATCC 51907 / DSM 11121 / KW20 / Rd).